The primary structure comprises 287 residues: Glycine--tRNA ligase alpha subunit (287 aa).

Belongs to the class-II aminoacyl-tRNA synthetase family. As to quaternary structure, tetramer of two alpha and two beta subunits.

Its subcellular location is the cytoplasm. It carries out the reaction tRNA(Gly) + glycine + ATP = glycyl-tRNA(Gly) + AMP + diphosphate. The polypeptide is Glycine--tRNA ligase alpha subunit (Campylobacter jejuni (strain RM1221)).